Consider the following 297-residue polypeptide: NAD(P)-dependent methylenetetrahydromethanopterin dehydrogenase (297 aa).

It to M.extorquens MtdA. In terms of assembly, homohexamer.

Its subcellular location is the cytoplasm. The enzyme catalyses 5,10-methylenetetrahydromethanopterin + NAD(+) = 5,10-methenyl-5,6,7,8-tetrahydromethanopterin + NADH. It catalyses the reaction 5,10-methylenetetrahydromethanopterin + NADP(+) = 5,10-methenyl-5,6,7,8-tetrahydromethanopterin + NADPH. It functions in the pathway one-carbon metabolism; formaldehyde degradation; formate from formaldehyde (H(4)MPT route): step 2/5. Functionally, catalyzes the dehydrogenation of methylene-H(4)MPT. This chain is NAD(P)-dependent methylenetetrahydromethanopterin dehydrogenase (mtdB), found in Methylorubrum extorquens (strain ATCC 14718 / DSM 1338 / JCM 2805 / NCIMB 9133 / AM1) (Methylobacterium extorquens).